The sequence spans 1021 residues: Caspase recruitment domain-containing protein 10 (1021 aa).

The disordered stretch occupies residues 1-24 (MQGRADAGEADEEAGAGSGSEAEE). Residue Ser-18 is modified to Phosphoserine. Residues 23–115 (EEDALWERIE…EHFTLLTGQE (93 aa)) enclose the CARD domain. The stretch at 138 to 450 (TEVRRLREAR…LEAQLQRTQG (313 aa)) forms a coiled coil. Disordered stretches follow at residues 475 to 544 (EFPS…MSDI), 597 to 616 (SPPAGLDPQDKSPDSMPGLG), and 790 to 809 (LVRPKPAGGTAGDSAEQLPA). Composition is skewed to basic and acidic residues over residues 495-508 (HTSEEATDSEKEIN) and 525-535 (RQREEDPEPPK).

CARD10 and BCL10 bind to each other by CARD-CARD interaction. They both participate in a complex with MALT1, where MALT1 binds to BCL10. Interacts with TMEM43; this interaction is essential for EGFR-mediated NF-kappa-B activation. Highly expressed in kidney, heart followed by brain, lung, liver, skeletal muscle and testis.

Functionally, scaffold protein that plays an important role in mediating the activation of NF-kappa-B via BCL10 or EGFR. This is Caspase recruitment domain-containing protein 10 (Card10) from Mus musculus (Mouse).